The sequence spans 338 residues: Protein SGT1 homolog (338 aa).

Alanine 2 carries the N-acetylalanine modification. 3 TPR repeats span residues 11-45 (AASRLFRSFSDALIEQDPQAALEELTKALEQKPDD), 46-79 (APYYCQRAYCHILLGNYSDAVADAKKSLELNPNS), and 80-113 (STALLRKGICEYHEKNYAAALETFTEGQKLNSAD). In terms of domain architecture, CS spans 142-231 (QSKIKYDWYQ…PEAVRWEKLE (90 aa)). The region spanning 249-338 (LYPSSSHYTR…PPDDMEWKKY (90 aa)) is the SGS domain. Serine 254 is subject to Phosphoserine. Residue threonine 257 is modified to Phosphothreonine. A Glycyl lysine isopeptide (Lys-Gly) (interchain with G-Cter in SUMO1); alternate cross-link involves residue lysine 268. Lysine 268 is covalently cross-linked (Glycyl lysine isopeptide (Lys-Gly) (interchain with G-Cter in SUMO2); alternate). Serine 304 carries the post-translational modification Phosphoserine.

This sequence belongs to the SGT1 family. In terms of assembly, probably associates with SCF (SKP1-CUL1-F-box protein) complex through interaction with SKP1. Interacts with S100A6. Interacts with HSP90. In terms of processing, phosphorylated at Ser-254 and Ser-304, dephosphorylation promotes nuclear translocation, most likely due to disruption of the SUGT1-HSP90 complex.

Its subcellular location is the cytoplasm. It is found in the nucleus. May play a role in ubiquitination and subsequent proteasomal degradation of target proteins. The chain is Protein SGT1 homolog from Bos taurus (Bovine).